We begin with the raw amino-acid sequence, 480 residues long: Glutathione reductase (480 aa).

FAD-binding residues include Ser-31 and Gly-32. Residue Ser-31 participates in glutathione binding. Position 38 (Arg-38) interacts with glutathione. 4 residues coordinate FAD: Glu-51, Thr-58, Cys-59, and Lys-67. Cys-59 and Cys-64 form a disulfide bridge. Tyr-121 contacts glutathione. Position 137 (Ala-137) interacts with FAD. NADP(+) contacts are provided by Ile-206, Glu-209, Arg-226, and Gly-291. Asp-331 contributes to the FAD binding site. Glu-337 lines the NADP(+) pocket. FAD is bound at residue Thr-339. Residue Arg-347 coordinates glutathione. Val-372 lines the NADP(+) pocket. Lys-422 contacts glutathione. Residue His-469 participates in FAD binding. His-469 (proton acceptor) is an active-site residue.

It belongs to the class-I pyridine nucleotide-disulfide oxidoreductase family. As to quaternary structure, homodimer. Requires FAD as cofactor.

It localises to the cytoplasm. It is found in the mitochondrion. It carries out the reaction 2 glutathione + NADP(+) = glutathione disulfide + NADPH + H(+). Functionally, catalyzes the reduction of glutathione disulfide (GSSG) to reduced glutathione (GSH). Constitutes the major mechanism to maintain a high GSH:GSSG ratio in the cytosol. The polypeptide is Glutathione reductase (GLR1) (Eremothecium gossypii (strain ATCC 10895 / CBS 109.51 / FGSC 9923 / NRRL Y-1056) (Yeast)).